The chain runs to 381 residues: cAMP-dependent protein kinase type I-beta regulatory subunit (381 aa).

A dimerization and phosphorylation region spans residues 2–136; sequence ASPPACPSEE…ALAKAISKNV (135 aa). Residue serine 3 is modified to Phosphoserine. Residue tyrosine 21 is modified to 3'-nitrotyrosine. The segment at 67 to 98 is disordered; that stretch reads ARQKSNSQSDSHDEEVSPTPPNPVVKARRRRG. Phosphoserine occurs at positions 77 and 83. Threonine 85 carries the post-translational modification Phosphothreonine. The Pseudophosphorylation motif signature appears at 96-100; it reads RRGGV. An Omega-N-methylarginine modification is found at arginine 97. 3',5'-cyclic AMP is bound by residues 137–254, glutamate 202, arginine 211, 255–381, glutamate 326, and arginine 335; these read LFAH…SKVS and ILES…SLTV.

This sequence belongs to the cAMP-dependent kinase regulatory chain family. As to quaternary structure, the inactive holoenzyme is composed of two regulatory chains and two catalytic chains. Activation by cAMP releases the two active catalytic monomers and the regulatory dimer. Interacts with PRKX; regulates this cAMP-dependent protein kinase. Interacts with C2orf88/smAKAP; this interaction may target PRKAR1B to the plasma membrane. Post-translationally, the pseudophosphorylation site binds to the substrate-binding region of the catalytic chain, resulting in the inhibition of its activity. Four types of regulatory chains are found: I-alpha, I-beta, II-alpha, and II-beta. Their expression varies among tissues and is in some cases constitutive and in others inducible.

Its subcellular location is the cell membrane. Functionally, regulatory subunit of the cAMP-dependent protein kinases involved in cAMP signaling in cells. This chain is cAMP-dependent protein kinase type I-beta regulatory subunit (PRKAR1B), found in Homo sapiens (Human).